The primary structure comprises 294 residues: 4-hydroxy-tetrahydrodipicolinate synthase (294 aa).

Thr-45 is a pyruvate binding site. The Proton donor/acceptor role is filled by Tyr-133. Lys-161 acts as the Schiff-base intermediate with substrate in catalysis. Ile-203 lines the pyruvate pocket.

This sequence belongs to the DapA family. In terms of assembly, homotetramer; dimer of dimers.

It localises to the cytoplasm. The enzyme catalyses L-aspartate 4-semialdehyde + pyruvate = (2S,4S)-4-hydroxy-2,3,4,5-tetrahydrodipicolinate + H2O + H(+). The protein operates within amino-acid biosynthesis; L-lysine biosynthesis via DAP pathway; (S)-tetrahydrodipicolinate from L-aspartate: step 3/4. Functionally, catalyzes the condensation of (S)-aspartate-beta-semialdehyde [(S)-ASA] and pyruvate to 4-hydroxy-tetrahydrodipicolinate (HTPA). The sequence is that of 4-hydroxy-tetrahydrodipicolinate synthase from Thioalkalivibrio sulfidiphilus (strain HL-EbGR7).